Consider the following 330-residue polypeptide: Phenylalanine--tRNA ligase alpha subunit (330 aa).

Glu255 lines the Mg(2+) pocket.

It belongs to the class-II aminoacyl-tRNA synthetase family. Phe-tRNA synthetase alpha subunit type 1 subfamily. In terms of assembly, tetramer of two alpha and two beta subunits. Mg(2+) serves as cofactor.

The protein resides in the cytoplasm. The catalysed reaction is tRNA(Phe) + L-phenylalanine + ATP = L-phenylalanyl-tRNA(Phe) + AMP + diphosphate + H(+). This chain is Phenylalanine--tRNA ligase alpha subunit, found in Acinetobacter baylyi (strain ATCC 33305 / BD413 / ADP1).